A 694-amino-acid polypeptide reads, in one-letter code: MSDQEFGLDAIRNIGIMAHIDAGKTTTTERILFYAGRTHKIGEVHEGGATMDWMEQEQERGITITSAATTVFWLGAKINIIDTPGHVDFTIEVERSLRVLDGAVAVFDAVSGVEPQSETVWRQANKYGVPRIAFVNKMDRMGANYFGAIESMREKLGANAIPVHCPIGSESQFVGMVDLISQKTLYFLEETLGAKWEEREIPEDLQEQCATLRMQLLEELATVDESNEAFMEKVLENPDSITEEEIHTVMRKGVIEGKINPVLCGSAFKNKGVQQLLDVIVKWLPSPLDRGNVRGINLKTGEEVSLKPSKDGPLAALAFKIMTDPYVGRITFIRIYSGTLKKGSAILNSTKDKKERISRLLEMHANERTDRDEFTVGDIGACVGLKFSVTGDTLCDENQEIVLERIEAPEPVIDMAIEPKSKGDREKLAQALSALSEEDPTFRVSTNEETGQTIISGMGELHLDILRDRMIREFRVEANVGKPQVSYKETITKTSNSETKYVKQSGGRGQYAHVCLEIEPNEPGKGNEVVSKIVGGVIPKEYIPAVIKGVEEGLNSGVLAGYGLVDVKVSIVFGSYHEVDSSEMAFKICGSMAVKEACRKALPVILEPIMKVTVITPEDHLGDVIGDLNRRRGKILGQESSRNMAQVSAEVPLSEMFGYMTSLRSLTSGRATSTMEPAFFAKVPQKIQEEIVKK.

A tr-type G domain is found at 9-288 (DAIRNIGIMA…VIVKWLPSPL (280 aa)). GTP is bound by residues 18-25 (AHIDAGKT), 82-86 (DTPGH), and 136-139 (NKMD).

This sequence belongs to the TRAFAC class translation factor GTPase superfamily. Classic translation factor GTPase family. EF-G/EF-2 subfamily.

It localises to the cytoplasm. Catalyzes the GTP-dependent ribosomal translocation step during translation elongation. During this step, the ribosome changes from the pre-translocational (PRE) to the post-translocational (POST) state as the newly formed A-site-bound peptidyl-tRNA and P-site-bound deacylated tRNA move to the P and E sites, respectively. Catalyzes the coordinated movement of the two tRNA molecules, the mRNA and conformational changes in the ribosome. The chain is Elongation factor G from Chlamydia trachomatis serovar A (strain ATCC VR-571B / DSM 19440 / HAR-13).